We begin with the raw amino-acid sequence, 591 residues long: Metalloendopeptidase OPG085 (591 aa).

A Zn(2+)-binding site is contributed by H41. Residue E44 is part of the active site. H45 contacts Zn(2+).

This sequence belongs to the peptidase M44 family. It depends on Zn(2+) as a cofactor. In terms of processing, undergoes proteolytic processing during the course of infection. May be cleaved into 46 kDa and 22 kDa products (Potential).

It is found in the virion. Functionally, probably involved in maturation of some viral proteins by processing them preferentially at Ala-Gly-|-Ser/Thr/Lys motifs. Does not seem to be responsible for the cleavage of major core proteins. The protein is Metalloendopeptidase OPG085 (OPG085) of Homo sapiens (Human).